The following is a 207-amino-acid chain: Large ribosomal subunit protein uL4 (207 aa).

The tract at residues 48-75 (THSVKNRSAVRGGGRKPWRQKGTGRARQ) is disordered. Residues 60–71 (GGRKPWRQKGTG) show a composition bias toward basic residues.

This sequence belongs to the universal ribosomal protein uL4 family. As to quaternary structure, part of the 50S ribosomal subunit.

One of the primary rRNA binding proteins, this protein initially binds near the 5'-end of the 23S rRNA. It is important during the early stages of 50S assembly. It makes multiple contacts with different domains of the 23S rRNA in the assembled 50S subunit and ribosome. In terms of biological role, forms part of the polypeptide exit tunnel. In Staphylococcus carnosus (strain TM300), this protein is Large ribosomal subunit protein uL4.